Consider the following 50-residue polypeptide: MALKKASLACAVCGSRNYSIKISGNPKPTRLEVNKFCKHCGKYTTHRETR.

Belongs to the bacterial ribosomal protein bL33 family.

The protein is Large ribosomal subunit protein bL33B of Streptococcus pneumoniae (strain ATCC BAA-255 / R6).